We begin with the raw amino-acid sequence, 564 residues long: Hexose transporter HXT13 (564 aa).

The Cytoplasmic portion of the chain corresponds to 1-52 (MSSAQSSIDSDGDVRDADIHVAPPVEKEWSDGFDDNEVINGDNVEPPKRGLI). Residues 53–73 (GYLVIYLLCYPISFGGFLPGW) traverse the membrane as a helical segment. The Extracellular segment spans residues 74–109 (DSGITAGFINMDNFKMNFGSYKHSTGEYYLSNVRMG). Residues 110 to 130 (LLVAMFSIGCAIGGLIFARLA) traverse the membrane as a helical segment. At 131 to 136 (DTLGRR) the chain is on the cytoplasmic side. Residues 137-157 (LAIVIVVLVYMVGAIIQISSN) form a helical membrane-spanning segment. Topologically, residues 158 to 167 (HKWYQYFVGK) are extracellular. A helical membrane pass occupies residues 168–188 (IIYGLGAGGCSVLCPMLLSEI). Residues 189-194 (APTDLR) lie on the Cytoplasmic side of the membrane. Residues 195–215 (GGLVSLYQLNMTFGIFLGYCS) traverse the membrane as a helical segment. Over 216–229 (VYGTRKYDNTAQWR) the chain is Extracellular. Residues 230 to 250 (VPLGLCFLWALIIIIGMLLVP) form a helical membrane-spanning segment. The Cytoplasmic segment spans residues 251–333 (ESPRYLIECE…VQTFLQLTGE (83 aa)). Residues 334-350 (NYFFFYGTTIFKSVGLT) form a helical membrane-spanning segment. The Extracellular portion of the chain corresponds to 351-356 (DGFETS). The chain crosses the membrane as a helical span at residues 357–374 (IVLGTVNFFSTIIAVMVV). At 375 to 381 (DKIGRRK) the chain is on the cytoplasmic side. A helical membrane pass occupies residues 382 to 402 (CLLFGAAGMMACMVIFASIGV). Residues 403 to 424 (KCLYPHGQDGPSSKGAGNAMIV) lie on the Extracellular side of the membrane. The chain crosses the membrane as a helical span at residues 425-445 (FTCFYIFCFATTWAPVAYIVV). Residues 446 to 462 (AESFPSKVKSRAMSIST) lie on the Cytoplasmic side of the membrane. The chain crosses the membrane as a helical span at residues 463-483 (ACNWLWQFLIGFFTPFITGSI). Histidine 484 is a topological domain (extracellular). The chain crosses the membrane as a helical span at residues 485-505 (FYYGYVFVGCLVAMFLYVFFF). Residues 506–564 (LPETIGLSLEEIQLLYEEGIKPWKSASWVPPSRRGISSEESKTEKKDWKKFLKFSKNSD) are Cytoplasmic-facing. The tract at residues 530 to 551 (SASWVPPSRRGISSEESKTEKK) is disordered. Residues 541-551 (ISSEESKTEKK) show a composition bias toward basic and acidic residues.

It belongs to the major facilitator superfamily. Sugar transporter (TC 2.A.1.1) family.

The protein resides in the membrane. In terms of biological role, probable glucose transporter. The chain is Hexose transporter HXT13 (HXT13) from Saccharomyces cerevisiae (strain ATCC 204508 / S288c) (Baker's yeast).